The following is a 271-amino-acid chain: Centromere protein K (271 aa).

2 coiled-coil regions span residues 11–44 (DTIT…QNKL) and 102–151 (LRCD…VENQ).

It belongs to the CENP-K/MCM22 family. Component of the CENPA-CAD complex, composed of CENPI, CENPK, CENPL, CENPO, CENPP, CENPQ, CENPR and CENPS. The CENPA-CAD complex interacts with the CENPA-NAC complex, at least composed of CENPA, CENPC, CENPH, CENPM, CENPN, CENPT and CENPU. May interact with Sox6. As to expression, highly expressed in testis.

It is found in the nucleus. Its subcellular location is the chromosome. The protein localises to the centromere. The protein resides in the kinetochore. Its function is as follows. Component of the CENPA-CAD (nucleosome distal) complex, a complex recruited to centromeres which is involved in assembly of kinetochore proteins, mitotic progression and chromosome segregation. May be involved in incorporation of newly synthesized CENPA into centromeres via its interaction with the CENPA-NAC complex. Acts in coordination with KNL1 to recruit the NDC80 complex to the outer kinetochore. The protein is Centromere protein K (Cenpk) of Mus musculus (Mouse).